The chain runs to 295 residues: Excinuclease cho (295 aa).

The region spanning 33–108 (TRPGVYLFHG…IKEQQPLFNK (76 aa)) is the GIY-YIG domain.

Incises the DNA at the 3' side of a lesion during nucleotide excision repair. Incises the DNA farther away from the lesion than UvrC. Not able to incise the 5' site of a lesion. In vitro, the incision activity of Cho is UvrA and UvrB dependent. When a lesion remains because UvrC is not able to induce the 3' incision, Cho incises the DNA. Then UvrC makes the 5' incision. The combined action of Cho and UvrC broadens the substrate range of nucleotide excision repair. This chain is Excinuclease cho (cho), found in Escherichia coli (strain K12).